A 398-amino-acid chain; its full sequence is 2-epi-5-epi-valiolone synthase (398 aa).

NAD(+) is bound by residues aspartate 62, 93-96 (ETVK), 126-130 (GVLMD), 150-151 (TT), lysine 163, lysine 172, and 190-193 (FLAT). Lysine 163 is a catalytic residue. A divalent metal cation is bound by residues glutamate 205, histidine 276, and histidine 292.

This sequence belongs to the sugar phosphate cyclases superfamily. EEVS family. NAD(+) serves as cofactor. It depends on Co(2+) as a cofactor.

The enzyme catalyses D-sedoheptulose 7-phosphate = 2-epi-5-epi-valiolone + phosphate. Functionally, catalyzes the cyclization of D-sedoheptulose 7-phosphate to 2-epi-5-epi-valiolone. Does not use ido-heptulose 7-phosphate and 3-deoxy-arabino-heptulosonate 7-phosphate. Involved in the biosynthesis of the acarviose moiety of the alpha-glucosidase inhibitor acarbose. In Actinoplanes sp. (strain ATCC 31044 / CBS 674.73 / SE50/110), this protein is 2-epi-5-epi-valiolone synthase.